The primary structure comprises 557 residues: Eudesmanediol synthase (557 aa).

Positions 310 and 314 each coordinate Mg(2+). Positions 310, 314, and 450 each coordinate substrate. The short motif at 310–314 (DDTFD) is the DDXXD motif element. Mg(2+)-binding residues include Asn-453 and Ser-457.

Belongs to the terpene synthase family. As to quaternary structure, monomer. It depends on Mg(2+) as a cofactor. The cofactor is Mn(2+).

It localises to the cytoplasm. It catalyses the reaction (2E,6E)-farnesyl diphosphate + 2 H2O = 7-epi-ent-eudesmane-5,11-diol + diphosphate. The protein operates within secondary metabolite biosynthesis; terpenoid biosynthesis. Functionally, component of the volatile terpenes biosynthesis pathways. Dihydroxylated sesquiterpenoid synthase that generates dually hydroxylated products directly from (E,E)-farnesyl diphosphate, primarily eudesmane-2,11-diol, along with two closely related structural isomers. In Zea mays (Maize), this protein is Eudesmanediol synthase.